We begin with the raw amino-acid sequence, 76 residues long: Exodeoxyribonuclease 7 small subunit (76 aa).

This sequence belongs to the XseB family. In terms of assembly, heterooligomer composed of large and small subunits.

The protein resides in the cytoplasm. It carries out the reaction Exonucleolytic cleavage in either 5'- to 3'- or 3'- to 5'-direction to yield nucleoside 5'-phosphates.. Its function is as follows. Bidirectionally degrades single-stranded DNA into large acid-insoluble oligonucleotides, which are then degraded further into small acid-soluble oligonucleotides. This Bacillus mycoides (strain KBAB4) (Bacillus weihenstephanensis) protein is Exodeoxyribonuclease 7 small subunit.